A 323-amino-acid chain; its full sequence is Viral cathepsin (323 aa).

The first 16 residues, 1–16, serve as a signal peptide directing secretion; sequence MNKILFYLFVYGVVNS. Residues 17-112 constitute a propeptide, activation peptide; the sequence is AAYDLLKAPN…IVLDQPPGKG (96 aa). Intrachain disulfides connect Cys133–Cys174, Cys167–Cys207, and Cys262–Cys310. The active site involves Cys136. Asn158 carries N-linked (GlcNAc...) asparagine; by host glycosylation. Catalysis depends on residues His269 and Asn289.

It belongs to the peptidase C1 family. Interacts with chitinase/CHIA; this interaction maintains VCATH in the host endoplasmic reticulum. Synthesized as an inactive proenzyme and activated by proteolytic removal of the inhibitory propeptide.

It is found in the host endoplasmic reticulum. It catalyses the reaction Endopeptidase of broad specificity, hydrolyzing substrates of both cathepsin L and cathepsin B.. Its function is as follows. Cysteine protease that plays an essential role in host liquefaction to facilitate horizontal transmission of the virus. Accumulates within infected cells as an inactive proenzyme (proV-CATH), which is activated by proteolytic cleavage upon cell death. This is Viral cathepsin (VCATH) from Lepidoptera (butterflies and moths).